Reading from the N-terminus, the 208-residue chain is Probable GTP-binding protein EngB (208 aa).

An EngB-type G domain is found at 29–203 (EGREVAFAGR…WDKLGEWLGI (175 aa)). Residues 37-44 (GRSNAGKS), 64-68 (GRTQL), 82-85 (DLPG), 149-152 (TKAD), and 182-184 (FSA) contribute to the GTP site. Ser-44 and Thr-66 together coordinate Mg(2+).

It belongs to the TRAFAC class TrmE-Era-EngA-EngB-Septin-like GTPase superfamily. EngB GTPase family. Mg(2+) serves as cofactor.

Necessary for normal cell division and for the maintenance of normal septation. This chain is Probable GTP-binding protein EngB, found in Alcanivorax borkumensis (strain ATCC 700651 / DSM 11573 / NCIMB 13689 / SK2).